The chain runs to 335 residues: Methionine import ATP-binding protein MetN (335 aa).

Residues 2-241 enclose the ABC transporter domain; the sequence is IEFQRLHKSY…PKHVTTRRFV (240 aa). 38 to 45 provides a ligand contact to ATP; that stretch reads GHSGAGKS.

The protein belongs to the ABC transporter superfamily. Methionine importer (TC 3.A.1.24) family. As to quaternary structure, the complex is composed of two ATP-binding proteins (MetN), two transmembrane proteins (MetI) and a solute-binding protein (MetQ).

The protein resides in the cell inner membrane. It catalyses the reaction L-methionine(out) + ATP + H2O = L-methionine(in) + ADP + phosphate + H(+). The catalysed reaction is D-methionine(out) + ATP + H2O = D-methionine(in) + ADP + phosphate + H(+). Functionally, part of the ABC transporter complex MetNIQ involved in methionine import. Responsible for energy coupling to the transport system. The chain is Methionine import ATP-binding protein MetN from Xanthomonas oryzae pv. oryzae (strain MAFF 311018).